The following is a 452-amino-acid chain: tRNA modification GTPase MnmE (452 aa).

(6S)-5-formyl-5,6,7,8-tetrahydrofolate is bound by residues Arg22, Glu79, and Lys119. Residues 215–375 enclose the TrmE-type G domain; that stretch reads GMKVVIAGRP…LRQHLKQSMG (161 aa). K(+) is bound at residue Asn225. Residues 225–230, 244–250, 269–272, and 333–336 contribute to the GTP site; these read NAGKSS, TDIAGTT, DTAG, and NKAD. Ser229 is a binding site for Mg(2+). K(+) is bound by residues Thr244, Ile246, and Thr249. Thr250 contacts Mg(2+). Lys452 is a (6S)-5-formyl-5,6,7,8-tetrahydrofolate binding site.

Belongs to the TRAFAC class TrmE-Era-EngA-EngB-Septin-like GTPase superfamily. TrmE GTPase family. As to quaternary structure, homodimer. Heterotetramer of two MnmE and two MnmG subunits. It depends on K(+) as a cofactor.

The protein resides in the cytoplasm. In terms of biological role, exhibits a very high intrinsic GTPase hydrolysis rate. Involved in the addition of a carboxymethylaminomethyl (cmnm) group at the wobble position (U34) of certain tRNAs, forming tRNA-cmnm(5)s(2)U34. This chain is tRNA modification GTPase MnmE, found in Histophilus somni (strain 129Pt) (Haemophilus somnus).